The primary structure comprises 494 residues: UDP-N-acetylmuramate--L-alanine ligase (494 aa).

140–146 (GTHGKTT) is a binding site for ATP.

Belongs to the MurCDEF family.

The protein localises to the cytoplasm. The catalysed reaction is UDP-N-acetyl-alpha-D-muramate + L-alanine + ATP = UDP-N-acetyl-alpha-D-muramoyl-L-alanine + ADP + phosphate + H(+). Its pathway is cell wall biogenesis; peptidoglycan biosynthesis. Functionally, cell wall formation. This is UDP-N-acetylmuramate--L-alanine ligase from Nostoc sp. (strain PCC 7120 / SAG 25.82 / UTEX 2576).